A 348-amino-acid polypeptide reads, in one-letter code: Phosphate acyltransferase (348 aa).

Belongs to the PlsX family. Homodimer. Probably interacts with PlsY.

The protein localises to the cytoplasm. It catalyses the reaction a fatty acyl-[ACP] + phosphate = an acyl phosphate + holo-[ACP]. It functions in the pathway lipid metabolism; phospholipid metabolism. Its function is as follows. Catalyzes the reversible formation of acyl-phosphate (acyl-PO(4)) from acyl-[acyl-carrier-protein] (acyl-ACP). This enzyme utilizes acyl-ACP as fatty acyl donor, but not acyl-CoA. The chain is Phosphate acyltransferase from Francisella philomiragia subsp. philomiragia (strain ATCC 25017 / CCUG 19701 / FSC 153 / O#319-036).